The sequence spans 213 residues: 3-isopropylmalate dehydratase small subunit (213 aa).

This sequence belongs to the LeuD family. LeuD type 1 subfamily. In terms of assembly, heterodimer of LeuC and LeuD.

The enzyme catalyses (2R,3S)-3-isopropylmalate = (2S)-2-isopropylmalate. It participates in amino-acid biosynthesis; L-leucine biosynthesis; L-leucine from 3-methyl-2-oxobutanoate: step 2/4. Catalyzes the isomerization between 2-isopropylmalate and 3-isopropylmalate, via the formation of 2-isopropylmaleate. This is 3-isopropylmalate dehydratase small subunit from Neisseria meningitidis serogroup A / serotype 4A (strain DSM 15465 / Z2491).